Consider the following 214-residue polypeptide: MKLLFDLFPVILFFIAFKLYGIYVATAVAIIASIAQVAYVYAKNKRIEKMHIITLALIVILGGATLILQDETFIKWKPTVVNWGFALVFLGSHFIGQKPIIRRMMDQAISLPDTAWIKLSYMWIAFFIFSGIANIYVAYQYDTDTWVNFKLFGLMGLTLAFILIQGVYISRFIKSSDLDKNDETEEKVMDSTIETLAEVELDSVVDSKHDSKKS.

The next 5 helical transmembrane spans lie at 11–31, 50–70, 81–101, 119–139, and 149–169; these read ILFF…VAII, MHII…ILQD, VNWG…KPII, LSYM…YVAY, and FKLF…GVYI.

Belongs to the YciB family.

The protein resides in the cell inner membrane. Its function is as follows. Plays a role in cell envelope biogenesis, maintenance of cell envelope integrity and membrane homeostasis. This Hydrogenovibrio crunogenus (strain DSM 25203 / XCL-2) (Thiomicrospira crunogena) protein is Inner membrane-spanning protein YciB.